A 144-amino-acid chain; its full sequence is Large ribosomal subunit protein uL15 (144 aa).

Residues 1 to 58 (MRLNTLAPAAGSKHAPKRVGRGIGSGLGKTGGRGHKGQKSRSGGKVRPGFEGGQMPLK) are disordered. Over residues 21-31 (RGIGSGLGKTG) the composition is skewed to gly residues. Over residues 32-44 (GRGHKGQKSRSGG) the composition is skewed to basic residues.

Belongs to the universal ribosomal protein uL15 family. Part of the 50S ribosomal subunit.

Functionally, binds to the 23S rRNA. The chain is Large ribosomal subunit protein uL15 from Vibrio parahaemolyticus serotype O3:K6 (strain RIMD 2210633).